The following is a 522-amino-acid chain: MGNCCPPGSSSEPDPPPASSGSSRPAGSAGAAASPATISPSAAPAPAKPPAPIGPVLGRPMEDVKSIYTVGKELGRGQFGVTSLCTHKATGQRFACKTISKRKLSTKEDVEDVRREVQIMYHLAGQPGVVELKGAYEDKHAVHLVMELCAGGELFDRIIAKGHYTEHAASSLLRTIVEIIHTCHSMGVIHRDLKPENFLLLSKDEHAPLKATDFGLSVFFKEGEVFRDIVGSAYYIAPEVLKRSYGPEADIWSIGVMLYILLCGVPPFWAESEHGIFNSILRGHVDFSSEPWSRISHGAKDLVRRMLHSDPKQRISAYDVLNHPWIKEDGEAPDTPLDNAVLGRLKQFRAMNQFKKAALRVIAGCLSEEEIRGLKEMFKSMDSDNSGTITVDELRKGLAKKGTKLTEAEVQQLMEAADADGNGTIDYEEFITATMHMNRMDREEHLYTAFQYFDKDNSGYITIEELEQALREKGLMDGREIKDIISEVDADNDGRINYTEFVAMMRKGDPEANPKKRRDVVL.

Composition is skewed to low complexity over residues 1–12 (MGNCCPPGSSSE) and 19–45 (SSGS…AAPA). The tract at residues 1-58 (MGNCCPPGSSSEPDPPPASSGSSRPAGSAGAAASPATISPSAAPAPAKPPAPIGPVLG) is disordered. G2 is lipidated: N-myristoyl glycine. The region spanning 68 to 326 (YTVGKELGRG…AYDVLNHPWI (259 aa)) is the Protein kinase domain. Residues 74-82 (LGRGQFGVT) and K97 each bind ATP. The Proton acceptor role is filled by D192. The interval 332-362 (APDTPLDNAVLGRLKQFRAMNQFKKAALRVI) is autoinhibitory domain. EF-hand domains are found at residues 369-404 (EEIR…KGTK), 405-440 (LTEA…MNRM), 441-476 (DREE…KGLM), and 480-511 (EIKD…GDPE). Ca(2+)-binding residues include D382, D384, S386, T388, E393, D418, D420, N422, T424, E429, D454, D456, S458, Y460, E465, D489, D491, D493, R495, and E500.

The protein belongs to the protein kinase superfamily. Ser/Thr protein kinase family. CDPK subfamily.

It is found in the membrane. It catalyses the reaction L-seryl-[protein] + ATP = O-phospho-L-seryl-[protein] + ADP + H(+). It carries out the reaction L-threonyl-[protein] + ATP = O-phospho-L-threonyl-[protein] + ADP + H(+). Activated by calcium. Autophosphorylation may play an important role in the regulation of the kinase activity. Its function is as follows. May play a role in signal transduction pathways that involve calcium as a second messenger. The chain is Calcium-dependent protein kinase 14 from Oryza sativa subsp. japonica (Rice).